The chain runs to 213 residues: Thiamine-phosphate synthase (213 aa).

4-amino-2-methyl-5-(diphosphooxymethyl)pyrimidine is bound by residues 38 to 42 (QLREK) and Asp70. Asp71 and Glu90 together coordinate Mg(2+). Residue Ser109 coordinates 4-amino-2-methyl-5-(diphosphooxymethyl)pyrimidine. 135-137 (TQT) is a binding site for 2-[(2R,5Z)-2-carboxy-4-methylthiazol-5(2H)-ylidene]ethyl phosphate. A 4-amino-2-methyl-5-(diphosphooxymethyl)pyrimidine-binding site is contributed by Lys138. 2-[(2R,5Z)-2-carboxy-4-methylthiazol-5(2H)-ylidene]ethyl phosphate-binding positions include Gly165 and 185 to 186 (VS).

This sequence belongs to the thiamine-phosphate synthase family. Mg(2+) is required as a cofactor.

It catalyses the reaction 2-[(2R,5Z)-2-carboxy-4-methylthiazol-5(2H)-ylidene]ethyl phosphate + 4-amino-2-methyl-5-(diphosphooxymethyl)pyrimidine + 2 H(+) = thiamine phosphate + CO2 + diphosphate. It carries out the reaction 2-(2-carboxy-4-methylthiazol-5-yl)ethyl phosphate + 4-amino-2-methyl-5-(diphosphooxymethyl)pyrimidine + 2 H(+) = thiamine phosphate + CO2 + diphosphate. The enzyme catalyses 4-methyl-5-(2-phosphooxyethyl)-thiazole + 4-amino-2-methyl-5-(diphosphooxymethyl)pyrimidine + H(+) = thiamine phosphate + diphosphate. It participates in cofactor biosynthesis; thiamine diphosphate biosynthesis; thiamine phosphate from 4-amino-2-methyl-5-diphosphomethylpyrimidine and 4-methyl-5-(2-phosphoethyl)-thiazole: step 1/1. Its function is as follows. Condenses 4-methyl-5-(beta-hydroxyethyl)thiazole monophosphate (THZ-P) and 2-methyl-4-amino-5-hydroxymethyl pyrimidine pyrophosphate (HMP-PP) to form thiamine monophosphate (TMP). This is Thiamine-phosphate synthase from Lacticaseibacillus paracasei (strain ATCC 334 / BCRC 17002 / CCUG 31169 / CIP 107868 / KCTC 3260 / NRRL B-441) (Lactobacillus paracasei).